An 84-amino-acid polypeptide reads, in one-letter code: Large ribosomal subunit protein uL23 (84 aa).

It belongs to the universal ribosomal protein uL23 family. Part of the 50S ribosomal subunit. Contacts protein L29.

Binds to 23S rRNA. One of the proteins that surrounds the polypeptide exit tunnel on the outside of the ribosome. The polypeptide is Large ribosomal subunit protein uL23 (Thermoplasma acidophilum (strain ATCC 25905 / DSM 1728 / JCM 9062 / NBRC 15155 / AMRC-C165)).